Consider the following 283-residue polypeptide: Urease accessory protein UreD 2 (283 aa).

The span at 1-11 (MGRRAPDRLDR) shows a compositional bias: basic and acidic residues. The interval 1-30 (MGRRAPDRLDRGVTTTSPRTQAPPQAGRGV) is disordered. The segment covering 13–23 (VTTTSPRTQAP) has biased composition (polar residues).

This sequence belongs to the UreD family. In terms of assembly, ureD, UreF and UreG form a complex that acts as a GTP-hydrolysis-dependent molecular chaperone, activating the urease apoprotein by helping to assemble the nickel containing metallocenter of UreC. The UreE protein probably delivers the nickel.

The protein resides in the cytoplasm. Its function is as follows. Required for maturation of urease via the functional incorporation of the urease nickel metallocenter. The polypeptide is Urease accessory protein UreD 2 (Saccharopolyspora erythraea (strain ATCC 11635 / DSM 40517 / JCM 4748 / NBRC 13426 / NCIMB 8594 / NRRL 2338)).